Here is a 682-residue protein sequence, read N- to C-terminus: MFRKKKKKRPEISAPQNFQHRVHTSFDPKEGKFVGLPPQWQNILDTLRRPKPVVDPSRITRVQLQPMKTVVRGSSVPTEGYISGLLNDIQKLSVISSNTLRGRSPTSRRRAQSLGLLGDDQWAADPDMYLQSPQSEHTDPHGLYLSCNGGTPAGHRQVPWPEPQSPQALPNGMAAKAQSLGPAEFQGASQRCLQQLGACLQSSPPGTSPPMATGRRGVKVAKHSSEEARPQSCLVGSAIGRPGGEGSPSPKNQESSLKHRLFRSMFLSTPATGAASSSKPVPLPQNKPNSAFRPPQKDSSSNLVAKAQSLPSEQPMGTFSPLTTSDTSSPQKSLRTAPAAGPLPGRSSPAGSPRTRHAQISTSNLYLPQDPTVAKGALGGEDTGIVTHEQFKAALRMVVDQGDPRLLLDSYVKIGEGSTGIVCLAREKHSGRQVAVKMMDLRKQQRRELLFNEVVIMRDYQHLNVVEMYKSYLVGEELWVLMEFLQGGALTDIISQVRLNEEQIATVCEAVLQALAYLHAQGVIHRDIKSDSILLTLDGRVKLSDFGFCAQISKDVPKRKSLVGTPYWMAPEVISRSLYATEVDIWSLGIMVIEMVDGEPPYFSDSPVQAMKRLRDSAPPKLKNSYKVSPVLRDFLDRMLVREPQERATAQELLDHPFLLQTGLPECLVPLIQLYRKQTSTC.

Disordered stretches follow at residues 1 to 30 (MFRKKKKKRPEISAPQNFQHRVHTSFDPKE), 132 to 170 (SPQSEHTDPHGLYLSCNGGTPAGHRQVPWPEPQSPQALP), 200 to 256 (LQSS…QESS), and 270 to 367 (PATG…NLYL). In terms of domain architecture, CRIB spans 12 to 25 (ISAPQNFQHRVHTS). A linker region spans residues 26–407 (FDPKEGKFVG…VVDQGDPRLL (382 aa)). Polar residues-rich tracts occupy residues 270-279 (PATGAASSSK) and 297-334 (KDSSSNLVAKAQSLPSEQPMGTFSPLTTSDTSSPQKSL). The 252-residue stretch at 408–659 (LDSYVKIGEG…AQELLDHPFL (252 aa)) folds into the Protein kinase domain. Residues 414-422 (IGEGSTGIV) and Lys-437 each bind ATP. Asp-527 acts as the Proton acceptor in catalysis. Ser-561 is modified (phosphoserine; by autocatalysis).

It belongs to the protein kinase superfamily. STE Ser/Thr protein kinase family. STE20 subfamily. Interacts tightly with GTP-bound but not GDP-bound CDC42/p21 and RAC1. Interacts with the androgen receptor AR. Interacts with IQGAP1 and PPM1B. Autophosphorylated. Phosphorylated by MAP2K6/MAPKK6, leading to PAK6 activation.

It localises to the cytoplasm. Its subcellular location is the nucleus. It carries out the reaction L-seryl-[protein] + ATP = O-phospho-L-seryl-[protein] + ADP + H(+). The enzyme catalyses L-threonyl-[protein] + ATP = O-phospho-L-threonyl-[protein] + ADP + H(+). In terms of biological role, serine/threonine protein kinase that plays a role in the regulation of gene transcription. The kinase activity is induced by various effectors including AR or MAP2K6/MAPKK6. Phosphorylates the DNA-binding domain of androgen receptor/AR and thereby inhibits AR-mediated transcription. Also inhibits ESR1-mediated transcription. May play a role in cytoskeleton regulation by interacting with IQGAP1. May protect cells from apoptosis through phosphorylation of BAD. This Mus musculus (Mouse) protein is Serine/threonine-protein kinase PAK 6 (Pak6).